Reading from the N-terminus, the 234-residue chain is Elongation factor Tu, chloroplastic (234 aa).

The tr-type G domain maps to Lys1–Glu125. GTP is bound at residue Asn47–Asp50.

It belongs to the TRAFAC class translation factor GTPase superfamily. Classic translation factor GTPase family. EF-Tu/EF-1A subfamily.

Its subcellular location is the plastid. It is found in the chloroplast. The catalysed reaction is GTP + H2O = GDP + phosphate + H(+). GTP hydrolase that promotes the GTP-dependent binding of aminoacyl-tRNA to the A-site of ribosomes during protein biosynthesis. The protein is Elongation factor Tu, chloroplastic (tufA) of Pandorina morum (Freshwater green alga).